The following is a 951-amino-acid chain: Exportin-2 (951 aa).

The Importin N-terminal domain maps to 29–104 (ATSKIQKFVK…KSLLLNFILS (76 aa)).

The protein belongs to the XPO2/CSE1 family.

It localises to the cytoplasm. It is found in the nucleus. In terms of biological role, export receptor for importin alpha. Mediates importin-alpha re-export from the nucleus to the cytoplasm after import substrates have been released into the nucleoplasm. The chain is Exportin-2 (xpo2) from Dictyostelium discoideum (Social amoeba).